Consider the following 1280-residue polypeptide: MGKEQELLEAARTGNVGLVEKLLSGKKGLLGSGSGSIPLPGLLSMWRGLNVNCVDGSGYTPLHHASLNGHRDVVLKLLQFEASTNVSDSKGCFPLHLAAWRGDVDIVQILIHHGPSHSRVNEQNLEKETALHCAAQYGHSEVVRVLLQELTDPSMRNSRGETPLDLAALYGRLQVVRMLLTAHPNLMSCNTRKHTPLHLAARNGHYATVQVLLEADMDVNTQTEKGSALHEAALFGKMDVVQLLLDSGIDANIRDCQGRTALDILREHPSQKSQQIASLIHDYMMSDCDRGNFHEDLARHRPIPTPRTSIPSPVPSPSLRHKNDAVTGELSKLLNEIKICRDKDCSFEELCQTISSHSQSMESFGSGRLSDEERNGTLTRINKRPTPPLPPALEEEEKSCGPSGLWEALTPCNGCRNLGFSQDKRCVEIAHSPSLDVFLPEDEDNPYESVATAVTRKPCSLDINLHNACPRNGHFSHVSVSDAERGNHGDDSTGLTPDCSPPSPDTALRNIERVIRPQPKQRTSLSSSQDVQKPLQNHSGDPSEVSSSLGYASFSTSPPASPPISPANCSTGSAEDYALTDEATYQKECIERDDRRNSHVPEQFAGLLHGSSPACESPDNPYQLYGKVRKFSVPEPPLRHGNFLRAPEYSPPFPRTGSEASALKTQREVKPQVVYRTIFHTRVNQGPVTFGEQVDKTTGVHARNGEARSNCTGGSSPANSNTGYEERACTLGRMRSMPKNVLDLQLSRNFSKSDSNLVAVSPIEEEQWGSRGQSSPGKSSPSRLERTPSFTAEWEEIDKIMSSIGAGIGTEMEGITEDHPGPRCPVQSVGQWLDNIGLVQYENHLLSNGFDNVQFMGSNVVEDQDLLEIGILNSAHRQRLLQAIRLLPRVRPIGYDGNNPTSVAEWLESLELGDYTKSFLINGYTSMELVKKIWEIELINVLKINLIGHRKRILASLGDRLHEDPPQKPPRAISLREPTGNHTPPQLSPSLSQAYPNAGSLDVQHLIMQADARRRRNDNYFEDVPRSKLERQMAQVSMQGEWCEPITLRPPNEATSSTPVQYWQHHPEKLIFQSCDYEAYYLGSMLVKELRGTESTHDACAKMRSTEQMKKIPTIVLSVSYKGVKFIDATNKNIIAEHEIRNISCAAQDPEDLSTFAYITKDLKSSHHYCHVFTAFDVNLAYEIILTLGQAFEVAYQLALQARKSGHGSSTLPESFDSKPSKPVPKPRGNIRKSMEQPSMDQKGHANVPWIVEPGQEAKRGANTKAMADAHVYYSGIQRM.

7 ANK repeats span residues 2–31, 57–86, 90–119, 126–155, 159–188, 192–221, and 224–253; these read GKEQELLEAARTGNVGLVEKLLSGKKGLLG, SGYTPLHHASLNGHRDVVLKLLQFEASTNV, KGCFPLHLAAWRGDVDIVQILIHHGPSHSR, EKETALHCAAQYGHSEVVRVLLQELTDPSM, RGETPLDLAALYGRLQVVRMLLTAHPNLMS, RKHTPLHLAARNGHYATVQVLLEADMDVNT, and EKGSALHEAALFGKMDVVQLLLDSGIDANI. Disordered regions lie at residues 299 to 322, 361 to 399, 479 to 573, 704 to 723, and 755 to 791; these read RHRPIPTPRTSIPSPVPSPSLRHK, MESFGSGRLSDEERNGTLTRINKRPTPPLPPALEEEEKS, SVSD…STGS, NGEARSNCTGGSSPANSNTG, and SNLVAVSPIEEEQWGSRGQSSPGKSSPSRLERTPSFT. The segment covering 482–491 has biased composition (basic and acidic residues); sequence DAERGNHGDD. Polar residues-rich tracts occupy residues 520–550, 707–723, and 770–782; these read KQRTSLSSSQDVQKPLQNHSGDPSEVSSSLG, ARSNCTGGSSPANSNTG, and SRGQSSPGKSSPS. SAM domains lie at 824–890 and 898–963; these read CPVQ…LPRV and NNPT…RLHE. 2 disordered regions span residues 960-994 and 1208-1243; these read RLHEDPPQKPPRAISLREPTGNHTPPQLSPSLSQA and GSSTLPESFDSKPSKPVPKPRGNIRKSMEQPSMDQK. Polar residues predominate over residues 980–994; it reads GNHTPPQLSPSLSQA. A PID domain is found at 1071–1223; the sequence is IFQSCDYEAY…ESFDSKPSKP (153 aa).

Its subcellular location is the cytoplasm. The sequence is that of Ankyrin repeat and sterile alpha motif domain-containing protein 1B (anks1b) from Danio rerio (Zebrafish).